The primary structure comprises 160 residues: Small ribosomal subunit protein uS7B (160 aa).

This sequence belongs to the universal ribosomal protein uS7 family. In terms of assembly, part of the 30S ribosomal subunit. Contacts proteins S9 and S11.

Functionally, one of the primary rRNA binding proteins, it binds directly to 16S rRNA where it nucleates assembly of the head domain of the 30S subunit. Is located at the subunit interface close to the decoding center, probably blocks exit of the E-site tRNA. This chain is Small ribosomal subunit protein uS7B, found in Aquifex aeolicus (strain VF5).